The primary structure comprises 689 residues: Glycine--tRNA ligase beta subunit (689 aa).

It belongs to the class-II aminoacyl-tRNA synthetase family. As to quaternary structure, tetramer of two alpha and two beta subunits.

The protein localises to the cytoplasm. It carries out the reaction tRNA(Gly) + glycine + ATP = glycyl-tRNA(Gly) + AMP + diphosphate. This chain is Glycine--tRNA ligase beta subunit, found in Escherichia coli O8 (strain IAI1).